The chain runs to 247 residues: Eukaryotic translation initiation factor 3 subunit J (247 aa).

Disordered regions lie at residues 1-64 (MADW…KTLK) and 77-101 (EEKRKAEEKQKLEEEDKELTPEEQM). The span at 24-45 (EGEDEDDDIKESWDDDDEDEKK) shows a compositional bias: acidic residues. Residues 43–108 (EKKEDEAKNT…EQMAEKLRRQ (66 aa)) adopt a coiled-coil conformation.

This sequence belongs to the eIF-3 subunit J family. In terms of assembly, component of the eukaryotic translation initiation factor 3 (eIF-3) complex.

It localises to the cytoplasm. Component of the eukaryotic translation initiation factor 3 (eIF-3) complex, which is involved in protein synthesis of a specialized repertoire of mRNAs and, together with other initiation factors, stimulates binding of mRNA and methionyl-tRNAi to the 40S ribosome. The eIF-3 complex specifically targets and initiates translation of a subset of mRNAs involved in cell proliferation. In Nematostella vectensis (Starlet sea anemone), this protein is Eukaryotic translation initiation factor 3 subunit J.